Reading from the N-terminus, the 313-residue chain is Formate-nitrite transporter (313 aa).

Topologically, residues M1 to A47 are cytoplasmic. Residues I48–F68 form a helical membrane-spanning segment. Residues Y69 to V77 lie on the Extracellular side of the membrane. The helical transmembrane segment at G78–I98 threads the bilayer. At C99–R128 the chain is on the cytoplasmic side. The chain crosses the membrane as a helical span at residues V129–S149. The Extracellular segment spans residues Y150–C185. Residue N179 is glycosylated (N-linked (GlcNAc...) asparagine). A helical transmembrane segment spans residues I186–I206. Topologically, residues K207 to G211 are cytoplasmic. A helical membrane pass occupies residues M212–I232. The Extracellular portion of the chain corresponds to A233 to P260. A glycan (N-linked (GlcNAc...) asparagine) is linked at N239. A helical transmembrane segment spans residues T261 to Y281. Residues R282–T313 are Cytoplasmic-facing.

Belongs to the FNT transporter (TC 1.A.16) family. As to quaternary structure, homopentamer.

The protein resides in the cell membrane. It is found in the vacuole membrane. It catalyses the reaction (S)-lactate(in) + H(+)(in) = (S)-lactate(out) + H(+)(out). It carries out the reaction formate(in) + H(+)(in) = formate(out) + H(+)(out). The enzyme catalyses pyruvate(out) + H(+)(out) = pyruvate(in) + H(+)(in). The catalysed reaction is acetate(out) + H(+)(out) = acetate(in) + H(+)(in). Inhibited by the Malaria Box compound MMV007839 and its derivatives BH296 and BH267.meta. Functionally, monocarboxylate-proton symporter that mediates the efflux of the waste product lactate in the intraerythrocytic parasites; active in acidic-to-neutral pH range. Transports L-lactate. This is Formate-nitrite transporter from Plasmodium ovale.